The primary structure comprises 331 residues: NADH-quinone oxidoreductase subunit H (331 aa).

8 helical membrane passes run 13–33 (FLIS…VLTL), 80–100 (WVFL…WLVI), 113–133 (IGLV…IMAG), 159–179 (LILS…VDIV), 183–203 (AGGF…AFFV), 249–269 (VMSA…LPFL), 273–293 (VFNW…FQWI), and 311–331 (KILV…MLVI).

The protein belongs to the complex I subunit 1 family. In terms of assembly, NDH-1 is composed of 14 different subunits. Subunits NuoA, H, J, K, L, M, N constitute the membrane sector of the complex.

The protein localises to the cell membrane. It carries out the reaction a quinone + NADH + 5 H(+)(in) = a quinol + NAD(+) + 4 H(+)(out). In terms of biological role, NDH-1 shuttles electrons from NADH, via FMN and iron-sulfur (Fe-S) centers, to quinones in the respiratory chain. The immediate electron acceptor for the enzyme in this species is believed to be ubiquinone. Couples the redox reaction to proton translocation (for every two electrons transferred, four hydrogen ions are translocated across the cytoplasmic membrane), and thus conserves the redox energy in a proton gradient. This subunit may bind ubiquinone. The protein is NADH-quinone oxidoreductase subunit H of Rubrobacter xylanophilus (strain DSM 9941 / JCM 11954 / NBRC 16129 / PRD-1).